Consider the following 60-residue polypeptide: Conotoxin VnMRCL-012 (60 aa).

The first 22 residues, 1–22 (MRCLPVFVILLLLIASAPGVDA), serve as a signal peptide directing secretion. Positions 23–50 (QPKTKYDVPLASRHDFAKKTPKRLSKPR) are excised as a propeptide.

This sequence belongs to the conotoxin T superfamily. Post-translationally, contains 2 disulfide bonds that can be either 'C1-C3, C2-C4' or 'C1-C4, C2-C3', since these disulfide connectivities have been observed for conotoxins with cysteine framework V (for examples, see AC P0DQQ7 and AC P81755). Expressed by the venom duct.

It localises to the secreted. This is Conotoxin VnMRCL-012 from Conus ventricosus (Mediterranean cone).